We begin with the raw amino-acid sequence, 355 residues long: Aromatic amino acid aminotransferase (355 aa).

N6-(pyridoxal phosphate)lysine is present on K217.

The protein belongs to the class-II pyridoxal-phosphate-dependent aminotransferase family. Homodimer. The cofactor is pyridoxal 5'-phosphate.

It catalyses the reaction an aromatic L-alpha-amino acid + 2-oxoglutarate = an aromatic oxo-acid + L-glutamate. Its function is as follows. Aminotransferase that catalyzes the conversion of aromatic amino acids and 2-oxoglutarate into corresponding aromatic oxo acids and L-glutamate. This is Aromatic amino acid aminotransferase from Mycobacterium avium (strain 104).